The primary structure comprises 461 residues: Homogentisate 1,2-dioxygenase (461 aa).

Fe cation-binding residues include His-341, Glu-347, and His-377.

Belongs to the homogentisate dioxygenase family. Fe cation serves as cofactor.

It carries out the reaction homogentisate + O2 = 4-maleylacetoacetate + H(+). It functions in the pathway amino-acid degradation; L-phenylalanine degradation; acetoacetate and fumarate from L-phenylalanine: step 4/6. This chain is Homogentisate 1,2-dioxygenase (HGO), found in Arabidopsis thaliana (Mouse-ear cress).